The chain runs to 414 residues: Serine hydroxymethyltransferase (414 aa).

Residues L121 and 125–127 (GHL) each bind (6S)-5,6,7,8-tetrahydrofolate. K229 carries the N6-(pyridoxal phosphate)lysine modification.

This sequence belongs to the SHMT family. As to quaternary structure, homodimer. Pyridoxal 5'-phosphate serves as cofactor.

It is found in the cytoplasm. It carries out the reaction (6R)-5,10-methylene-5,6,7,8-tetrahydrofolate + glycine + H2O = (6S)-5,6,7,8-tetrahydrofolate + L-serine. It participates in one-carbon metabolism; tetrahydrofolate interconversion. The protein operates within amino-acid biosynthesis; glycine biosynthesis; glycine from L-serine: step 1/1. Its function is as follows. Catalyzes the reversible interconversion of serine and glycine with tetrahydrofolate (THF) serving as the one-carbon carrier. This reaction serves as the major source of one-carbon groups required for the biosynthesis of purines, thymidylate, methionine, and other important biomolecules. Also exhibits THF-independent aldolase activity toward beta-hydroxyamino acids, producing glycine and aldehydes, via a retro-aldol mechanism. The sequence is that of Serine hydroxymethyltransferase from Polaromonas naphthalenivorans (strain CJ2).